The following is a 244-amino-acid chain: Protein FAM168A (244 aa).

At Met1 the chain carries N-acetylmethionine. Arg102 is subject to Asymmetric dimethylarginine. A disordered region spans residues 107–126; sequence TPYKVPPTQSNTAPPPYSPS.

The protein belongs to the FAM168 family. In terms of assembly, interacts with POLB. Interacts with AKT1 and MT1X. May interact with FAM168B.

In cancer context, protects cells from induced-DNA damage and apoptosis. Acts, at least in part, through PI3K/AKT/NFKB signaling pathway and by preventing POLB degradation. Decreases POLB ubiquitation and stabilizes its protein levels. The polypeptide is Protein FAM168A (Fam168a) (Mus musculus (Mouse)).